The following is a 271-amino-acid chain: Formamidopyrimidine-DNA glycosylase (271 aa).

The active-site Schiff-base intermediate with DNA is Pro-2. The Proton donor role is filled by Glu-3. Lys-58 serves as the catalytic Proton donor; for beta-elimination activity. DNA contacts are provided by His-92, Arg-111, and Arg-152. Residues 237–271 (FVYGREGEACKQCGRVLKHATIGQRATVWCGSCQR) form an FPG-type zinc finger. Arg-261 acts as the Proton donor; for delta-elimination activity in catalysis.

This sequence belongs to the FPG family. As to quaternary structure, monomer. Requires Zn(2+) as cofactor.

It carries out the reaction Hydrolysis of DNA containing ring-opened 7-methylguanine residues, releasing 2,6-diamino-4-hydroxy-5-(N-methyl)formamidopyrimidine.. The enzyme catalyses 2'-deoxyribonucleotide-(2'-deoxyribose 5'-phosphate)-2'-deoxyribonucleotide-DNA = a 3'-end 2'-deoxyribonucleotide-(2,3-dehydro-2,3-deoxyribose 5'-phosphate)-DNA + a 5'-end 5'-phospho-2'-deoxyribonucleoside-DNA + H(+). Its function is as follows. Involved in base excision repair of DNA damaged by oxidation or by mutagenic agents. Acts as a DNA glycosylase that recognizes and removes damaged bases. Has a preference for oxidized purines, such as 7,8-dihydro-8-oxoguanine (8-oxoG). Has AP (apurinic/apyrimidinic) lyase activity and introduces nicks in the DNA strand. Cleaves the DNA backbone by beta-delta elimination to generate a single-strand break at the site of the removed base with both 3'- and 5'-phosphates. The protein is Formamidopyrimidine-DNA glycosylase of Xanthomonas axonopodis pv. citri (strain 306).